A 333-amino-acid chain; its full sequence is Protein SEEDLING LETHAL 1, chloroplastic (333 aa).

A chloroplast-targeting transit peptide spans 1–55; it reads MQQEALSFLSSSLPSLHHNFPSLSRLRFNNFPALSFKPNTSSSSSSFFKSPDIPS. A disordered region spans residues 38–67; sequence PNTSSSSSSFFKSPDIPSLSSTTTTTTTTE.

It belongs to the mTERF family. In terms of assembly, self-interacts. Associates with the plastid-encoded RNA polymerase (PEP) complex. Interacts directly with PTAC7/PAP12, PTAC12/HMR/PAP5 and PTAC14/PAP7. In terms of tissue distribution, expressed in green aerial tissues such as cotyledons, leaves, flowers and siliques, but not in roots.

It localises to the plastid. Its subcellular location is the chloroplast stroma. The protein resides in the chloroplast nucleoid. In terms of biological role, transcription termination factor required for chloroplast gene expression and protein synthesis in chloroplasts. Necessary for chloroplast photosynthetic complexes assembly by modulating the accumulation of photosynthetic proteins. Essential for embryogenesis. This chain is Protein SEEDLING LETHAL 1, chloroplastic, found in Arabidopsis thaliana (Mouse-ear cress).